The sequence spans 129 residues: MKEVIDTVGRRKTSVARVFMSPGKGRVIINKLPAEEYFRDEVKRQQALRPLALTEKMEDFDIKVNVHGGGVSGQTGAVSLAIARALTEFDESARAVLKKEKLLTRDPRMVERKKFGRKKARKRFQFSKR.

The protein belongs to the universal ribosomal protein uS9 family.

The sequence is that of Small ribosomal subunit protein uS9 from Chlorobium phaeobacteroides (strain DSM 266 / SMG 266 / 2430).